We begin with the raw amino-acid sequence, 75 residues long: Chaplin-D (75 aa).

Residues 1-23 (MKKSAAVVAGAIMALGMAAPAFA) form the signal peptide. A Chaplin domain is found at 34 to 74 (SPGVLSGNVIQVPVHVPVNVCGNSINVVGLLNPAFGNKCEN). An intrachain disulfide couples cysteine 54 to cysteine 72.

It belongs to the chaplin family. Short chaplin subfamily.

It is found in the cell surface. The protein resides in the secreted. Its subcellular location is the cell wall. It localises to the fimbrium. In terms of biological role, one of 8 partially redundant surface-active proteins required for efficient formation of aerial mycelium; the short chaplins assemble into a hydrophobic, amyloidal fibrillar surface layer that envelopes and protects aerial hyphae and spores, presumably anchored to the long chaplins. Chaplins have an overlapping function with the surface-active SapB peptide; chaplins are essential on minimal medium while on rich medium both chaplins and SapB are required for efficient aerial hyphae formation. Chaplins are also involved in cell attachment to a hydrophobic surface. Forms amyloid fibrils in vitro probably composed of stacked beta-sheets, at low extracellular concentrations individually restores the ability to form aerial hyphae to a chaplin-deficient strain. A small chaplin extract (ChpD, ChpE, ChpF, ChpG and ChpH) self-assembles into 2 different amyloids; small fibrils at the air-water interface form an amphipathic membrane that resembles spore-surface structures involved in aerial hyphae formation, and hydrophilic fibrils in solution that resemble the fibers that attach cells to a hydrophobic surface. At the air-water interface the hydrophilic surface is in contact with water (probably equivalent to the peptidoglycan layer), while the hydrophobic face is exposed to the air, making the surface of the aerial hyphae hydrophobic. A minimal chaplin strain capable of forming aerial mycelium/hyphae on minimal medium contains ChpC, ChpE and ChpH. The strain also has restored rodlet formation on the hyphae surface. A second minimal chaplin strain with ChpA, ChpD and ChpE makes slightly less robust hyphae. A small chaplin extract applied to a chaplin-deficient strain restores aerial hyphae formation. The small chaplin extract forms an amyloid-like structure similar to that seen on the surface of cells without rodlets (rdlA-rdlB deletions), and is highly surface active, reducing surface tension from 72 to 26 mJ/m(2), which probably allows escape of hyphae from an aqueous environment into air. The protein is Chaplin-D of Streptomyces coelicolor (strain ATCC BAA-471 / A3(2) / M145).